We begin with the raw amino-acid sequence, 338 residues long: Large ribosomal subunit protein uL10 (338 aa).

Positions 298-338 (TVQQSQSQQPAAEEKKEEKKEEEKKGPSEEEIASGLASLFG) are disordered. The span at 309–325 (AEEKKEEKKEEEKKGPS) shows a compositional bias: basic and acidic residues.

It belongs to the universal ribosomal protein uL10 family. Part of the 50S ribosomal subunit. Forms part of the ribosomal stalk which helps the ribosome interact with GTP-bound translation factors. Forms a heptameric L10(L12)2(L12)2(L12)2 complex, where L10 forms an elongated spine to which the L12 dimers bind in a sequential fashion.

Functionally, forms part of the ribosomal stalk, playing a central role in the interaction of the ribosome with GTP-bound translation factors. In Saccharolobus solfataricus (strain ATCC 35092 / DSM 1617 / JCM 11322 / P2) (Sulfolobus solfataricus), this protein is Large ribosomal subunit protein uL10.